The primary structure comprises 253 residues: Triosephosphate isomerase (253 aa).

Position 8 to 10 (asparagine 8 to lysine 10) interacts with substrate. The active-site Electrophile is the histidine 91. The Proton acceptor role is filled by glutamate 168. Residues glycine 174, serine 213, and glycine 234–glycine 235 contribute to the substrate site.

This sequence belongs to the triosephosphate isomerase family. In terms of assembly, homodimer.

The protein localises to the cytoplasm. It carries out the reaction D-glyceraldehyde 3-phosphate = dihydroxyacetone phosphate. It participates in carbohydrate biosynthesis; gluconeogenesis. It functions in the pathway carbohydrate degradation; glycolysis; D-glyceraldehyde 3-phosphate from glycerone phosphate: step 1/1. Involved in the gluconeogenesis. Catalyzes stereospecifically the conversion of dihydroxyacetone phosphate (DHAP) to D-glyceraldehyde-3-phosphate (G3P). In Acidiphilium cryptum (strain JF-5), this protein is Triosephosphate isomerase.